A 361-amino-acid chain; its full sequence is MAALSLKGVRKSYDGKQHVLHGIDVEIADGEFIVLVGPSGCGKSTLLRMIAGLETVTDGEIAIGERVVNTLEPKDRDIAMVFQNYALYPHMTVAQNMGYGLKIRGIERTTIDSRVAAAAKILELEPLLARRPRELSGGQRQRVAMGRAIVREPSVFLFDEPLSNLDAKLRVQMRLEIQRLHARLATTSVYVTHDQIEAMTLAQRVIVMNRGYAEQIGAPVDVYEKPATVFVAGFIGSPAMNLMHGRLSDDGATFTVAGGGPALPVAGAPGIGAAIATGRDWVLGVRPEHMTPQPGVAQATLPVDSCELLGADNLAHGRWGNHDVAVRLPHADRPARGTALAAALPAHRLHFFDPETGKRAG.

In terms of domain architecture, ABC transporter spans 4–235; the sequence is LSLKGVRKSY…PATVFVAGFI (232 aa). 37–44 is a binding site for ATP; the sequence is GPSGCGKS.

It belongs to the ABC transporter superfamily. sn-glycerol-3-phosphate importer (TC 3.A.1.1.3) family. The complex is composed of two ATP-binding proteins (UgpC), two transmembrane proteins (UgpA and UgpE) and a solute-binding protein (UgpB).

The protein resides in the cell inner membrane. The catalysed reaction is sn-glycerol 3-phosphate(out) + ATP + H2O = sn-glycerol 3-phosphate(in) + ADP + phosphate + H(+). In terms of biological role, part of the ABC transporter complex UgpBAEC involved in sn-glycerol-3-phosphate (G3P) import. Responsible for energy coupling to the transport system. This chain is sn-glycerol-3-phosphate import ATP-binding protein UgpC, found in Burkholderia lata (strain ATCC 17760 / DSM 23089 / LMG 22485 / NCIMB 9086 / R18194 / 383).